A 461-amino-acid polypeptide reads, in one-letter code: tRNA modification GTPase MnmE (461 aa).

Positions 27, 89, and 128 each coordinate (6S)-5-formyl-5,6,7,8-tetrahydrofolate. In terms of domain architecture, TrmE-type G spans 224–382 (GLKTAIVGRP…LEALIKKLFF (159 aa)). N234 serves as a coordination point for K(+). Residues 234-239 (NVGKSS), 253-259 (TDVAGTT), and 278-281 (DTAG) each bind GTP. A Mg(2+)-binding site is contributed by S238. 3 residues coordinate K(+): T253, V255, and T258. T259 is a Mg(2+) binding site. Residue K461 coordinates (6S)-5-formyl-5,6,7,8-tetrahydrofolate.

Belongs to the TRAFAC class TrmE-Era-EngA-EngB-Septin-like GTPase superfamily. TrmE GTPase family. In terms of assembly, homodimer. Heterotetramer of two MnmE and two MnmG subunits. Requires K(+) as cofactor.

It localises to the cytoplasm. Exhibits a very high intrinsic GTPase hydrolysis rate. Involved in the addition of a carboxymethylaminomethyl (cmnm) group at the wobble position (U34) of certain tRNAs, forming tRNA-cmnm(5)s(2)U34. The protein is tRNA modification GTPase MnmE of Lactobacillus delbrueckii subsp. bulgaricus (strain ATCC BAA-365 / Lb-18).